Consider the following 332-residue polypeptide: Nucleoid-associated protein VIBHAR_03026 (332 aa).

Belongs to the YejK family.

It is found in the cytoplasm. Its subcellular location is the nucleoid. This is Nucleoid-associated protein VIBHAR_03026 from Vibrio campbellii (strain ATCC BAA-1116).